The chain runs to 352 residues: Rhodopsin (352 aa).

The Extracellular portion of the chain corresponds to 1-36 (MNGTEGPFFYIPMVNTTGIVRSPYEYPQYYLVNPAA). N-linked (GlcNAc...) asparagine glycans are attached at residues asparagine 2 and asparagine 15. The helical transmembrane segment at 37-61 (YAALGAYMFFLILTGFPINFLTLYV) threads the bilayer. Over 62-73 (TLEHKKLRTALN) the chain is Cytoplasmic. Residues 74–96 (LILLNLAVADLFMVFGGFTTTMY) traverse the membrane as a helical segment. At 97–110 (TSMHGYFVLGRLGC) the chain is on the extracellular side. An intrachain disulfide couples cysteine 110 to cysteine 187. A helical membrane pass occupies residues 111–133 (NVEGFFATLGGEIALWSLVVLAV). A 'Ionic lock' involved in activated form stabilization motif is present at residues 134-136 (ERW). Over 134 to 152 (ERWVVVCKPISNFRFTENH) the chain is Cytoplasmic. Residues 153-173 (AIMGVAFSWIMAATCAVPPLV) traverse the membrane as a helical segment. Topologically, residues 174-202 (GWSRYIPEGMQCSCGVDYYTRAEGFNNES) are extracellular. Residues 203-224 (FVIYMFIVHFLAPLIVIFFCYG) form a helical membrane-spanning segment. At 225-252 (RLLCAVKEAAAAQQESETTQRAEREVTR) the chain is on the cytoplasmic side. Residues 253–274 (MVIIMVIGFLTSWLPYASVAWY) traverse the membrane as a helical segment. The Extracellular portion of the chain corresponds to 275-286 (IFTHQGTEFGPL). A helical membrane pass occupies residues 287–308 (FMTIPAFFAKSSALYNPMIYIC). Lysine 296 carries the N6-(retinylidene)lysine modification. The Cytoplasmic segment spans residues 309-352 (MNKQFRHCMITTLCCGKNPFEEEEGASTTKTEASSVSSSSVSPA). 2 S-palmitoyl cysteine lipidation sites follow: cysteine 322 and cysteine 323. The tract at residues 331–352 (EEGASTTKTEASSVSSSSVSPA) is disordered. Residues 342–352 (SSVSSSSVSPA) show a composition bias toward low complexity.

The protein belongs to the G-protein coupled receptor 1 family. Opsin subfamily. Phosphorylated on some or all of the serine and threonine residues present in the C-terminal region. In terms of processing, contains one covalently linked retinal chromophore.

It localises to the membrane. The protein localises to the cell projection. Its subcellular location is the cilium. It is found in the photoreceptor outer segment. Its function is as follows. Photoreceptor required for image-forming vision at low light intensity. While most salt water fish species use retinal as chromophore, most freshwater fish use 3-dehydroretinal, or a mixture of retinal and 3-dehydroretinal. Light-induced isomerization of 11-cis to all-trans retinal triggers a conformational change that activates signaling via G-proteins. Subsequent receptor phosphorylation mediates displacement of the bound G-protein alpha subunit by arrestin and terminates signaling. The sequence is that of Rhodopsin (rho) from Pomatoschistus minutus (Sand goby).